Consider the following 1026-residue polypeptide: Multidrug resistance protein MdtC (1026 aa).

A run of 11 helical transmembrane segments spans residues 15–35 (ILIA…LPVA), 333–353 (EVEE…FLFL), 360–380 (LIPA…MYLC), 387–407 (LSLM…IVVL), 431–451 (VGFT…PLLL), 463–483 (FAVT…TLTP), 528–548 (LVGV…IAIP), 853–873 (LILI…LYES), 897–917 (LFNA…IGIV), 953–973 (PIMM…LSGG), and 984–1004 (ITIV…TPVV).

It belongs to the resistance-nodulation-cell division (RND) (TC 2.A.6) family. MdtC subfamily. Part of a tripartite efflux system composed of MdtA, MdtB and MdtC. MdtC forms a heteromultimer with MdtB.

It is found in the cell inner membrane. The sequence is that of Multidrug resistance protein MdtC from Salmonella enteritidis PT4 (strain P125109).